Consider the following 534-residue polypeptide: CTP synthase (534 aa).

Positions 1–267 (MTKYIFVTGG…DQIVCDHLKL (267 aa)) are amidoligase domain. CTP is bound at residue S13. S13 contacts UTP. 14–19 (SIGKGI) is a binding site for ATP. Y54 is a binding site for L-glutamine. An ATP-binding site is contributed by D71. Mg(2+) is bound by residues D71 and E141. CTP contacts are provided by residues 148 to 150 (DIE), 188 to 193 (KTKPTQ), and K224. UTP contacts are provided by residues 188–193 (KTKPTQ) and K224. An ATP-binding site is contributed by 240 to 242 (RDV). The region spanning 292–534 (KIALVGKYVE…FVTAAIKNSN (243 aa)) is the Glutamine amidotransferase type-1 domain. Position 354 (G354) interacts with L-glutamine. Residue C381 is the Nucleophile; for glutamine hydrolysis of the active site. Residues 382 to 385 (LGMQ), E405, and R463 contribute to the L-glutamine site. Catalysis depends on residues H508 and E510.

The protein belongs to the CTP synthase family. In terms of assembly, homotetramer.

It catalyses the reaction UTP + L-glutamine + ATP + H2O = CTP + L-glutamate + ADP + phosphate + 2 H(+). The catalysed reaction is L-glutamine + H2O = L-glutamate + NH4(+). It carries out the reaction UTP + NH4(+) + ATP = CTP + ADP + phosphate + 2 H(+). The protein operates within pyrimidine metabolism; CTP biosynthesis via de novo pathway; CTP from UDP: step 2/2. Its activity is regulated as follows. Allosterically activated by GTP, when glutamine is the substrate; GTP has no effect on the reaction when ammonia is the substrate. The allosteric effector GTP functions by stabilizing the protein conformation that binds the tetrahedral intermediate(s) formed during glutamine hydrolysis. Inhibited by the product CTP, via allosteric rather than competitive inhibition. Functionally, catalyzes the ATP-dependent amination of UTP to CTP with either L-glutamine or ammonia as the source of nitrogen. Regulates intracellular CTP levels through interactions with the four ribonucleotide triphosphates. In Streptococcus pyogenes serotype M1, this protein is CTP synthase.